We begin with the raw amino-acid sequence, 232 residues long: Phosphatidylserine decarboxylase proenzyme (232 aa).

Ser-190 acts as the Schiff-base intermediate with substrate; via pyruvic acid in catalysis. Ser-190 bears the Pyruvic acid (Ser); by autocatalysis mark.

It belongs to the phosphatidylserine decarboxylase family. PSD-A subfamily. As to quaternary structure, heterodimer of a large membrane-associated beta subunit and a small pyruvoyl-containing alpha subunit. Requires pyruvate as cofactor. In terms of processing, is synthesized initially as an inactive proenzyme. Formation of the active enzyme involves a self-maturation process in which the active site pyruvoyl group is generated from an internal serine residue via an autocatalytic post-translational modification. Two non-identical subunits are generated from the proenzyme in this reaction, and the pyruvate is formed at the N-terminus of the alpha chain, which is derived from the carboxyl end of the proenzyme. The post-translation cleavage follows an unusual pathway, termed non-hydrolytic serinolysis, in which the side chain hydroxyl group of the serine supplies its oxygen atom to form the C-terminus of the beta chain, while the remainder of the serine residue undergoes an oxidative deamination to produce ammonia and the pyruvoyl prosthetic group on the alpha chain.

It localises to the cell membrane. The catalysed reaction is a 1,2-diacyl-sn-glycero-3-phospho-L-serine + H(+) = a 1,2-diacyl-sn-glycero-3-phosphoethanolamine + CO2. Its pathway is phospholipid metabolism; phosphatidylethanolamine biosynthesis; phosphatidylethanolamine from CDP-diacylglycerol: step 2/2. Catalyzes the formation of phosphatidylethanolamine (PtdEtn) from phosphatidylserine (PtdSer). This Cereibacter sphaeroides (strain ATCC 17025 / ATH 2.4.3) (Rhodobacter sphaeroides) protein is Phosphatidylserine decarboxylase proenzyme.